The chain runs to 392 residues: Iron-sulfur cluster assembly SufBD family protein ML0594 (392 aa).

The protein belongs to the iron-sulfur cluster assembly SufBD family.

The chain is Iron-sulfur cluster assembly SufBD family protein ML0594 from Mycobacterium leprae (strain TN).